The sequence spans 440 residues: Cysteine proteinase (440 aa).

The signal sequence occupies residues 1–60 (MYSSSVVSNPNERLVNNRVENDLESSDDTLSTQAKPVSRLLTRKLLLGVVVLFFLAGVSV). The propeptide at 61–229 (VSYFLFSKYK…DEDVDLAKLT (169 aa)) is activation peptide. The interval 166-182 (VKGINRFSDLTEREFYK) is involved in processing to yield active enzymes. A glycan (N-linked (GlcNAc...) asparagine) is linked at Asn206. Cysteines 250 and 291 form a disulfide. Active-site residues include Cys253, His382, and Asn404.

This sequence belongs to the peptidase C1 family.

The sequence is that of Cysteine proteinase from Theileria parva (East coast fever infection agent).